A 647-amino-acid polypeptide reads, in one-letter code: MRAYGKRGPVLRTPFRSNKGLPSSSDVEFSDDDVNSVIPDVSSTISSSIADHPIEGLLDEPRKAQDSSSSFDGANEKPSSQLDSKRNDQNVKIITSSDTSMAFMKDEKLSAFNFLDGSKASKRKRRRTYQKHDANITSSIEPDVQDEDSITMHNEFESIRKIYNDINEFILKLPRADDDILNKMLENEMKMDDSIENNSIRTSKDKKYGKFRTILINKNKENEIMGEEVDQKANTLSLNNADNSNAEKEGLTSTNHYNELKNMGDTIKYQDDIEFLLSNSKSNDNTTVPINEYFKKLLNLSLMIINDEEFFQYAKRYFKKEIIKLSFAQFRSDFPELILLQGYLLHKVSESQSDFPPSFDNFSIELSKDDGKIRTKKNKHIKKLSHLNFEDFLRKTQFKTGLYYSLSLWEMHGNLSLDIIKRISILASNKDLFSRHVKTFIPLLEKLITASEFCHMYIEQPEMFDSLISNLNNQFKDMLDDDSLIKILILLTNMEVHNYTLWKEADMIFQSSMNTILESIHPLTDAKVDNILLHLGLCLNICSRENSRLKLDGKLWYDMKTIFVKMIRDGSDTENRLVQGLFYLNFSFLIKQRKENSNLDPGELNLLLVELEAFKSETSQFNEGISNKIEIALNYLKSIYTSERITI.

Residues 1 to 90 are disordered; that stretch reads MRAYGKRGPV…QLDSKRNDQN (90 aa). Residues 66 to 82 are compositionally biased toward polar residues; the sequence is DSSSSFDGANEKPSSQL.

Its subcellular location is the nucleus. In terms of biological role, involved in resistance to ionizing radiation. The chain is Protein RAD61 (RAD61) from Saccharomyces cerevisiae (strain ATCC 204508 / S288c) (Baker's yeast).